The chain runs to 328 residues: B3 domain-containing protein At5g60140 (328 aa).

The TF-B3 DNA-binding region spans 13 to 109; the sequence is SKFFKPYLPS…FFNFSIFDHE (97 aa). The disordered stretch occupies residues 145–221; the sequence is LNSDDSDDSD…EDEDDLEDED (77 aa). Acidic residues-rich tracts occupy residues 148-182 and 190-221; these read DDSD…AEDG and GLED…EDED.

It is found in the nucleus. The polypeptide is B3 domain-containing protein At5g60140 (Arabidopsis thaliana (Mouse-ear cress)).